The sequence spans 201 residues: Superoxide dismutase [Mn] (201 aa).

Mn(2+)-binding residues include histidine 27, histidine 81, aspartate 163, and histidine 167.

Belongs to the iron/manganese superoxide dismutase family. As to quaternary structure, homodimer. It depends on Mn(2+) as a cofactor.

The catalysed reaction is 2 superoxide + 2 H(+) = H2O2 + O2. Its function is as follows. Destroys superoxide anion radicals which are normally produced within the cells and which are toxic to biological systems. May play a critical role against oxidative stress, affecting both the survival and the virulence of S.pneumoniae. The chain is Superoxide dismutase [Mn] (sodA) from Streptococcus pneumoniae serotype 4 (strain ATCC BAA-334 / TIGR4).